Here is a 296-residue protein sequence, read N- to C-terminus: Thioredoxin-related transmembrane protein 2 (296 aa).

Residues 1 to 48 (MAVLAPLIALVYSVPRLSRWLARPYYFLSALLSAAFLLVRKLPPVCES) form the signal peptide. The Extracellular portion of the chain corresponds to 49–102 (LPTQREDGNPCDFDWREVEILMFLSAIVMMKNRRSITVEQHVGNIFMFSKVANA). A helical membrane pass occupies residues 103–125 (ILFFRLDIRMGLLYITLCIVFLM). The Cytoplasmic portion of the chain corresponds to 126–296 (TCKPPLYMGP…VPDEESKKDK (171 aa)). In terms of domain architecture, Thioredoxin spans 132–269 (YMGPEYIKYF…LYQRAKKLSK (138 aa)). Phosphoserine is present on residues Ser211 and Ser243. Positions 272–296 (DKIPEEQPVAAVPAAVPDEESKKDK) are disordered. The segment covering 277–287 (EQPVAAVPAAV) has biased composition (low complexity). A Di-lysine motif motif is present at residues 293 to 296 (KKDK).

In terms of assembly, monomer. Homodimer; disulfide-linked. Occurs in both reduced and oxidized monomeric form. Oxidative conditions increase homodimerization. Interacts with CANX. Interacts with ATP2A2.

It is found in the endoplasmic reticulum membrane. The protein resides in the mitochondrion membrane. Functionally, endoplasmic reticulum and mitochondria-associated protein that probably functions as a regulator of cellular redox state and thereby regulates protein post-translational modification, protein folding and mitochondrial activity. Indirectly regulates neuronal proliferation, migration, and organization in the developing brain. The sequence is that of Thioredoxin-related transmembrane protein 2 (TMX2) from Bos taurus (Bovine).